Consider the following 286-residue polypeptide: Shikimate dehydrogenase (NADP(+)) (286 aa).

Shikimate contacts are provided by residues 22–24 (SRS) and threonine 71. The active-site Proton acceptor is the lysine 75. Glutamate 87 serves as a coordination point for NADP(+). Shikimate-binding residues include asparagine 96 and aspartate 111. NADP(+) contacts are provided by residues 136 to 140 (GAGGA), 160 to 165 (NRTVER), and isoleucine 225. Tyrosine 227 serves as a coordination point for shikimate. Glycine 248 provides a ligand contact to NADP(+).

This sequence belongs to the shikimate dehydrogenase family. Homodimer.

The enzyme catalyses shikimate + NADP(+) = 3-dehydroshikimate + NADPH + H(+). The protein operates within metabolic intermediate biosynthesis; chorismate biosynthesis; chorismate from D-erythrose 4-phosphate and phosphoenolpyruvate: step 4/7. Its function is as follows. Involved in the biosynthesis of the chorismate, which leads to the biosynthesis of aromatic amino acids. Catalyzes the reversible NADPH linked reduction of 3-dehydroshikimate (DHSA) to yield shikimate (SA). This chain is Shikimate dehydrogenase (NADP(+)), found in Rhizobium rhizogenes (strain K84 / ATCC BAA-868) (Agrobacterium radiobacter).